A 301-amino-acid chain; its full sequence is Putative F-box/LRR-repeat protein 19 (301 aa).

The F-box domain maps to 18–66 (PDWSELTRECLLDIFSRLSQEQRWIGPMLVSKNWMNACYDPTLNTIFDL). LRR repeat units lie at residues 108 to 133 (IRHC…WIKN), 134 to 159 (CPNV…DISY), 160 to 185 (SYGI…KRNL), 231 to 256 (YSTL…DLRG), and 257 to 282 (CISL…IKPD).

This is Putative F-box/LRR-repeat protein 19 (FBL19) from Arabidopsis thaliana (Mouse-ear cress).